Reading from the N-terminus, the 204-residue chain is MESWLIPAAPVTVVEEIKKSRFITMLAHTDGVEAAKAFVESVRAEHPDARHHCVAWVAGAPDDSQQLGFSDDGEPAGTAGKPMLAQLMGSGVGEITAVVVRYYGGILLGTGGLVKAYGGGVNQALRQLTTQRKTPLTEYTLQCEYHQLTGIEALLGQCDGKIINSDYQAFVLLRVALPAAKVAEFSAKLADFSRGSLQLLAIEE.

It belongs to the IMPACT family. Monomer.

The polypeptide is IMPACT family member YigZ (yigZ) (Escherichia coli (strain K12)).